The sequence spans 274 residues: Tropomyosin (274 aa).

The segment at 1–30 is disordered; it reads MKLEKDNAMDRADTLEQQNKEANIRAEKAE. Residues 1–274 adopt a coiled-coil conformation; the sequence is MKLEKDNAMD…DQTFSELSGY (274 aa).

The protein belongs to the tropomyosin family. As to quaternary structure, homodimer.

Tropomyosin, in association with the troponin complex, plays a central role in the calcium dependent regulation of muscle contraction. The sequence is that of Tropomyosin from Panulirus stimpsoni (Chinese spiny lobster).